The chain runs to 708 residues: ABC transporter G family member 18 (708 aa).

Residues 75–317 (RRRFDFSRRK…FSSFGRPIPE (243 aa)) form the ABC transporter domain. 109–116 (GGSGAGKS) contacts ATP. The ABC transmembrane type-2 domain maps to 402-612 (AETFILAKRY…PYEAVLINEF (211 aa)). 7 helical membrane-spanning segments follow: residues 421–441 (LIGMRIGTVMVTGLLLATVYW), 456–476 (FFAFGMSTMFYCCADNIPVFI), 508–528 (LLALSIAFAATTFWTVGLSGG), 537–557 (LIIYAAFWSGSSIVTFISGLI), 560–580 (VMMSYMVTIAYLSYCLLLGGF), 589–609 (LYWIWFHYISLLKYPYEAVLI), and 681–701 (LWITLAWGLFFRILFYLSLLF).

The protein belongs to the ABC transporter superfamily. ABCG family. Eye pigment precursor importer (TC 3.A.1.204) subfamily.

It is found in the membrane. In Arabidopsis thaliana (Mouse-ear cress), this protein is ABC transporter G family member 18 (ABCG18).